Here is a 114-residue protein sequence, read N- to C-terminus: Small ribosomal subunit protein bS6 (114 aa).

Belongs to the bacterial ribosomal protein bS6 family.

In terms of biological role, binds together with bS18 to 16S ribosomal RNA. The sequence is that of Small ribosomal subunit protein bS6 from Phocaeicola vulgatus (strain ATCC 8482 / DSM 1447 / JCM 5826 / CCUG 4940 / NBRC 14291 / NCTC 11154) (Bacteroides vulgatus).